We begin with the raw amino-acid sequence, 214 residues long: Transcription factor MYB24 (214 aa).

HTH myb-type domains lie at 14 to 66 (DAEV…LNYL) and 67 to 121 (RPDV…QKYI). 2 consecutive DNA-binding regions (H-T-H motif) follow at residues 42 to 66 (WNSL…LNYL) and 94 to 117 (WSKI…RTKI).

In terms of assembly, interacts (via N-terminus) with TIFY10A/JAZ1, TIFY5A/JAZ8 AND TIFY3A/JAZ11. In terms of tissue distribution, expressed specifically in flowers. Expressed in all four whorls of the flower and in the vascular tissue of stamen filament and sepals. Detected in male and female gametophytes, especially in microspores and ovules. Weakly expressed in petals and the upper part of pistils.

It is found in the nucleus. Functionally, transcription factor acting redundantly with MYB21 and MYB57 to control stamen filament elongation in the late developed flowers. Contributes with MYB21 to induction of MYB108 by jasmonate. Repressed at the transcript levels by DELLA proteins. The polypeptide is Transcription factor MYB24 (MYB24) (Arabidopsis thaliana (Mouse-ear cress)).